The sequence spans 262 residues: Small ribosomal subunit protein eS1 (262 aa).

This sequence belongs to the eukaryotic ribosomal protein eS1 family. Component of the small ribosomal subunit. Mature ribosomes consist of a small (40S) and a large (60S) subunit. The 40S subunit contains about 33 different proteins and 1 molecule of RNA (18S). The 60S subunit contains about 49 different proteins and 3 molecules of RNA (25S, 5.8S and 5S).

The protein resides in the cytoplasm. This is Small ribosomal subunit protein eS1 from Cryptosporidium hominis.